A 321-amino-acid polypeptide reads, in one-letter code: Olfactory receptor 56B34 (321 aa).

Residues 1 to 36 (MGTALHETNSSEVHVSEFILLGFPGIHEFQIWLSLP) lie on the Extracellular side of the membrane. A helical membrane pass occupies residues 37–57 (MALLYIVALGANLLILITIYL). Over 58–70 (EPTLHQPMYQFLG) the chain is Cytoplasmic. Residues 71 to 91 (ILAAVDIGLATTSMPKILAIL) traverse the membrane as a helical segment. The Extracellular portion of the chain corresponds to 92–105 (WFDAKTISLPECFA). The cysteines at positions 103 and 185 are disulfide-linked. Residues 106 to 126 (QIYAIHTFMCMESGVFLCMAI) traverse the membrane as a helical segment. The Cytoplasmic segment spans residues 127–128 (DR). The chain crosses the membrane as a helical span at residues 129–149 (YVAICYPLQYPSIVTEAFVIK). The Extracellular segment spans residues 150–207 (ATLSMLLRNGLLTIPVPVLAAQRQYCSRNEIDHCLCSNLGVISLACDDITVNRFYQLA). The helical transmembrane segment at 208-228 (LAWLVVGSDMILVYASYALII) threads the bilayer. Over 229–250 (RSVLRLNSTEAASKALSTCSSH) the chain is Cytoplasmic. The helical transmembrane segment at 251–271 (LILIMFYYTAIVIVSVTHLAG) threads the bilayer. Topologically, residues 272–275 (RRVP) are extracellular. The chain crosses the membrane as a helical span at residues 276 to 296 (LIPVLLNVMHIVIPPSLNPVV). Residues 297 to 321 (YALRTQELKVGFRKVFSLSEFVSRK) lie on the Cytoplasmic side of the membrane.

This sequence belongs to the G-protein coupled receptor 1 family.

It localises to the cell membrane. Functionally, odorant receptor. In Mus musculus (Mouse), this protein is Olfactory receptor 56B34.